The sequence spans 769 residues: Endothelin-converting enzyme 1 (769 aa).

The Cytoplasmic segment spans residues 1 to 67 (MRTVWSPLAA…WAARTSVEKR (67 aa)). Thr24 bears the Phosphothreonine mark. A helical; Signal-anchor for type II membrane protein transmembrane segment spans residues 68-88 (LVVLVTLLAAGLVACLAALGI). Topologically, residues 89–769 (QYQTRTPPVC…MNPHHKCEVW (681 aa)) are extracellular. Positions 97–769 (VCLTEACVSV…MNPHHKCEVW (673 aa)) constitute a Peptidase M13 domain. Disulfide bonds link Cys98–Cys103, Cys121–Cys754, Cys129–Cys714, Cys184–Cys434, and Cys643–Cys766. 8 N-linked (GlcNAc...) asparagine glycosylation sites follow: Asn165, Asn186, Asn209, Asn269, Asn315, Asn361, Asn382, and Asn538. His606 is a Zn(2+) binding site. Residue Glu607 is part of the active site. Position 610 (His610) interacts with Zn(2+). Asn631 and Asn650 each carry an N-linked (GlcNAc...) asparagine glycan. Glu666 is a binding site for Zn(2+). The Proton donor role is filled by Asp670.

It belongs to the peptidase M13 family. As to quaternary structure, homodimer; disulfide-linked. Interacts with PPP1R16B. Interacts with TSPAN8; this interaction recruits the endothelin converting enzyme ECE1 to tetraspanin-enriched microdomains and positively modulates its enzymatic activity. Zn(2+) serves as cofactor.

Its subcellular location is the cell membrane. The catalysed reaction is Hydrolysis of the 21-Trp-|-Val-22 bond in big endothelin to form endothelin 1.. With respect to regulation, inhibited by phosphoramidon. In terms of biological role, converts big endothelin-1 to endothelin-1. This is Endothelin-converting enzyme 1 (Ece1) from Mus musculus (Mouse).